The following is a 1039-amino-acid chain: Probable inorganic carbon transporter subunit DabA 2 (1039 aa).

Cys-462, Asp-464, His-721, and Cys-736 together coordinate Zn(2+).

The protein belongs to the inorganic carbon transporter (TC 9.A.2) DabA family. In terms of assembly, forms a complex with DabB. Requires Zn(2+) as cofactor.

The protein resides in the cell inner membrane. In terms of biological role, part of an energy-coupled inorganic carbon pump. The chain is Probable inorganic carbon transporter subunit DabA 2 from Nitrobacter hamburgensis (strain DSM 10229 / NCIMB 13809 / X14).